We begin with the raw amino-acid sequence, 449 residues long: Protein tweety homolog 1-A (449 aa).

The Extracellular portion of the chain corresponds to 1–43 (MSTSHGYRASWWTNILHQVPHTNFQFEVVDNQFAPQEWPYQQA). A helical membrane pass occupies residues 44 to 64 (LLFLASIAGLCLAISLILICV). Topologically, residues 65 to 86 (YLIRFCCCASQEDDDSKNHRVC) are cytoplasmic. A helical membrane pass occupies residues 87–107 (CVTWSCVAAVIICCAGIGIGF). The Extracellular portion of the chain corresponds to 108–212 (YGNSETNDGV…QVNFIEDYRW (105 aa)). The N-linked (GlcNAc...) asparagine glycan is linked to Asn128. Residues 213–233 (LAYILLLLLDLIICLFTLLGL) traverse the membrane as a helical segment. Over 234–238 (AKRIK) the chain is Cytoplasmic. A helical membrane pass occupies residues 239 to 259 (WLVIVMTVVSFFVLLLSWGSM). Topologically, residues 260-388 (GLEMATAVGL…LKGLCYDGME (129 aa)) are extracellular. Cystine bridges form between Cys273–Cys383 and Cys301–Cys368. Residues Asn282 and Asn353 are each glycosylated (N-linked (GlcNAc...) asparagine). A helical membrane pass occupies residues 389 to 409 (GILFLLLFSFLSALSFTAAVC). At 410–449 (SLPRAWKRFQNRDLDYDDMDEDDPFNPQESKRFVQWQSSI) the chain is on the cytoplasmic side.

This sequence belongs to the tweety family. In terms of assembly, homotetramer; disulfide-linked. Homodimer.

The protein resides in the cell membrane. It carries out the reaction chloride(in) = chloride(out). It catalyses the reaction L-glutamate(out) = L-glutamate(in). May act as a calcium-independent, swelling-dependent volume-regulated anion channel (VRAC-swell) which plays a pivotal role in the process of regulatory volume decrease (RVD) in the brain through the efflux of anions like chloride and organic osmolytes like glutamate. This Xenopus laevis (African clawed frog) protein is Protein tweety homolog 1-A (ttyh1-a).